Reading from the N-terminus, the 149-residue chain is Transcriptional regulator MraZ (149 aa).

SpoVT-AbrB domains are found at residues 5–52 (ITTL…PLPE) and 81–124 (AEEC…DSMV).

The protein belongs to the MraZ family. As to quaternary structure, forms oligomers.

It localises to the cytoplasm. The protein localises to the nucleoid. This is Transcriptional regulator MraZ from Nitrosococcus oceani (strain ATCC 19707 / BCRC 17464 / JCM 30415 / NCIMB 11848 / C-107).